The primary structure comprises 206 residues: Small ribosomal subunit protein uS4A (206 aa).

Positions 96–156 (GRLDNVVYRM…EKAKKQSRIG (61 aa)) constitute an S4 RNA-binding domain.

It belongs to the universal ribosomal protein uS4 family. In terms of assembly, part of the 30S ribosomal subunit. Contacts protein S5. The interaction surface between S4 and S5 is involved in control of translational fidelity.

One of the primary rRNA binding proteins, it binds directly to 16S rRNA where it nucleates assembly of the body of the 30S subunit. In terms of biological role, with S5 and S12 plays an important role in translational accuracy. The chain is Small ribosomal subunit protein uS4A from Psychromonas ingrahamii (strain DSM 17664 / CCUG 51855 / 37).